We begin with the raw amino-acid sequence, 96 residues long: Co-chaperonin GroES (96 aa).

Belongs to the GroES chaperonin family. In terms of assembly, heptamer of 7 subunits arranged in a ring. Interacts with the chaperonin GroEL.

Its subcellular location is the cytoplasm. Together with the chaperonin GroEL, plays an essential role in assisting protein folding. The GroEL-GroES system forms a nano-cage that allows encapsulation of the non-native substrate proteins and provides a physical environment optimized to promote and accelerate protein folding. GroES binds to the apical surface of the GroEL ring, thereby capping the opening of the GroEL channel. The chain is Co-chaperonin GroES from Methylobacterium radiotolerans (strain ATCC 27329 / DSM 1819 / JCM 2831 / NBRC 15690 / NCIMB 10815 / 0-1).